The sequence spans 153 residues: 6,7-dimethyl-8-ribityllumazine synthase (153 aa).

5-amino-6-(D-ribitylamino)uracil contacts are provided by residues F22, 56-58, and 80-82; these read AFE and AVI. Residue 85-86 coordinates (2S)-2-hydroxy-3-oxobutyl phosphate; sequence ST. The active-site Proton donor is H88. F113 lines the 5-amino-6-(D-ribitylamino)uracil pocket. R127 provides a ligand contact to (2S)-2-hydroxy-3-oxobutyl phosphate.

The protein belongs to the DMRL synthase family.

The catalysed reaction is (2S)-2-hydroxy-3-oxobutyl phosphate + 5-amino-6-(D-ribitylamino)uracil = 6,7-dimethyl-8-(1-D-ribityl)lumazine + phosphate + 2 H2O + H(+). It functions in the pathway cofactor biosynthesis; riboflavin biosynthesis; riboflavin from 2-hydroxy-3-oxobutyl phosphate and 5-amino-6-(D-ribitylamino)uracil: step 1/2. Its function is as follows. Catalyzes the formation of 6,7-dimethyl-8-ribityllumazine by condensation of 5-amino-6-(D-ribitylamino)uracil with 3,4-dihydroxy-2-butanone 4-phosphate. This is the penultimate step in the biosynthesis of riboflavin. This is 6,7-dimethyl-8-ribityllumazine synthase from Clostridium novyi (strain NT).